The chain runs to 688 residues: Complement C1s subcomponent (688 aa).

The N-terminal stretch at 1–15 is a signal peptide; it reads MWCFVFFSLLASFSA. The 115-residue stretch at 16–130 folds into the CUB 1 domain; sequence EPTMYGEILS…TGFAAYYSAV (115 aa). Residues Glu60, Asp68, Asp113, Asp131, Val132, and Glu134 each coordinate Ca(2+). A disulfide bridge links Cys65 with Cys83. An EGF-like; calcium-binding domain is found at 131–172; sequence DVNECTDFTDVPCSHFCNNFIGGYFCSCPPEYFLHDDMRTCG. Disulfide bonds link Cys135/Cys147, Cys143/Cys156, and Cys158/Cys171. Residues Asn149, Phe150, and Gly153 each contribute to the Ca(2+) site. Asn149 is modified ((3R)-3-hydroxyasparagine). Residue Asn174 is glycosylated (N-linked (GlcNAc...) asparagine). Cys175 and Cys202 are disulfide-bonded. A CUB 2 domain is found at 175–290; it reads CSGDVFTALI…KGWKLRYHGD (116 aa). Positions 226, 236, 275, 278, and 279 each coordinate Ca(2+). A disulfide bridge links Cys234 with Cys251. Sushi domains are found at residues 292–356 and 357–423; these read IPCP…ECQP and VDCG…KCIP. 7 disulfide bridges follow: Cys294–Cys341, Cys321–Cys354, Cys359–Cys403, Cys386–Cys421, Cys425–Cys549, Cys595–Cys618, and Cys627–Cys659. The N-linked (GlcNAc...) asparagine glycan is linked to Asn406. Residues 438 to 680 enclose the Peptidase S1 domain; the sequence is IFGGYSTKIQ…YVDWILKTMQ (243 aa). Catalysis depends on charge relay system residues His475 and Asp529. The active-site Charge relay system is Ser631.

This sequence belongs to the peptidase S1 family. Core component of the complement C1 complex, a calcium-dependent complex composed of 1 molecule of the C1Q subcomplex, 2 molecules of C1R and 2 molecules of C1S. The C1Q subcomplex is composed 18 subunits: 3 chains of C1QA, C1QB, and C1QC trimerize to form 6 collagen-like triple helices connected to six globular ligand-recognition modules. Cleaved and activated by C1R to generate Complement C1s subcomponent heavy and light chains. Post-translationally, the iron and 2-oxoglutarate dependent 3-hydroxylation of aspartate and asparagine is (R) stereospecific within EGF domains.

It localises to the secreted. The protein resides in the cell surface. It catalyses the reaction Cleavage of Arg-|-Ala bond in complement component C4 to form C4a and C4b, and Lys(or Arg)-|-Lys bond in complement component C2 to form C2a and C2b: the 'classical' pathway C3 convertase.. Its activity is regulated as follows. Cleaved and activated by C1R. Immunoglobulin-binding promotes autoactivation of C1R, which results in the cleavage of the Arg-Ile bond in the catalytic domain. Inhibited by C1 inhibitor (SERPING1). Its function is as follows. Component of the complement C1 complex, a multiprotein complex that initiates the classical pathway of the complement system, a cascade of proteins that leads to phagocytosis and breakdown of pathogens and signaling that strengthens the adaptive immune system. C1S is activated following association of the C1 complex with immunoglobulins (IgG or IgM) complexed with antigens to form antigen-antibody complexes on the surface of pathogens. C1S is cleaved and activated by C1R to generate C1s subcomponent heavy and light chains. C1s subcomponent light chain then cleaves and activates C2 and C4, the next components of the classical complement pathway. Serine protease component of the complement C1 complex, which catalyzes cleavage and activation of C2 and C4, the next components of the classical complement pathway. Also cleaves IGFBP5 and thereby inhibits the trophic effects of IGF1. This chain is Complement C1s subcomponent, found in Rattus norvegicus (Rat).